We begin with the raw amino-acid sequence, 482 residues long: Cardiolipin synthase (482 aa).

The next 2 helical transmembrane spans lie at 4-24 (LAYL…VTVF) and 34-54 (WAWL…YLIF). 2 consecutive PLD phosphodiesterase domains span residues 217 to 244 (LNYR…GDEY) and 395 to 422 (DNGF…DFRS). Catalysis depends on residues His222, Lys224, Asp229, His400, Lys402, and Asp407.

The protein belongs to the phospholipase D family. Cardiolipin synthase subfamily.

The protein resides in the cell membrane. It catalyses the reaction 2 a 1,2-diacyl-sn-glycero-3-phospho-(1'-sn-glycerol) = a cardiolipin + glycerol. Its function is as follows. Catalyzes the reversible phosphatidyl group transfer from one phosphatidylglycerol molecule to another to form cardiolipin (CL) (diphosphatidylglycerol) and glycerol. This chain is Cardiolipin synthase (cls), found in Listeria monocytogenes serotype 4b (strain CLIP80459).